The chain runs to 39 residues: MQATLIKPTIFTHQPILEKLFKSQSMTQEESXQLFAAIV.

It belongs to the anthranilate phosphoribosyltransferase family. Homodimer.

It catalyses the reaction N-(5-phospho-beta-D-ribosyl)anthranilate + diphosphate = 5-phospho-alpha-D-ribose 1-diphosphate + anthranilate. It functions in the pathway amino-acid biosynthesis; L-tryptophan biosynthesis; L-tryptophan from chorismate: step 2/5. Its function is as follows. Catalyzes the transfer of the phosphoribosyl group of 5-phosphorylribose-1-pyrophosphate (PRPP) to anthranilate to yield N-(5'-phosphoribosyl)-anthranilate (PRA). The sequence is that of Anthranilate phosphoribosyltransferase (trpD) from Pectobacterium carotovorum (Erwinia carotovora).